The sequence spans 437 residues: Chromosomal replication initiator protein DnaA (437 aa).

Residues 1–69 form a domain I, interacts with DnaA modulators region; the sequence is MLGDTTLKQL…AHLFELSTGI (69 aa). The tract at residues 69–100 is domain II; sequence IRPKIEIRLGSLKKDVKSSSPKAGVSKGQKST. A domain III, AAA+ region region spans residues 101-315; the sequence is ILNPSFTFDS…GIIIKLNAYA (215 aa). Residues Gly-145, Gly-147, Lys-148, and Thr-149 each contribute to the ATP site. The interval 316–437 is domain IV, binds dsDNA; that stretch reads NLMNQEITLQ…ELKNKIKSRN (122 aa).

Belongs to the DnaA family. As to quaternary structure, oligomerizes as a right-handed, spiral filament on DNA at oriC.

Its subcellular location is the cytoplasm. In terms of biological role, plays an essential role in the initiation and regulation of chromosomal replication. ATP-DnaA binds to the origin of replication (oriC) to initiate formation of the DNA replication initiation complex once per cell cycle. Binds the DnaA box (a 9 base pair repeat at the origin) and separates the double-stranded (ds)DNA. Forms a right-handed helical filament on oriC DNA; dsDNA binds to the exterior of the filament while single-stranded (ss)DNA is stabiized in the filament's interior. The ATP-DnaA-oriC complex binds and stabilizes one strand of the AT-rich DNA unwinding element (DUE), permitting loading of DNA polymerase. After initiation quickly degrades to an ADP-DnaA complex that is not apt for DNA replication. Binds acidic phospholipids. In Wolinella succinogenes (strain ATCC 29543 / DSM 1740 / CCUG 13145 / JCM 31913 / LMG 7466 / NCTC 11488 / FDC 602W) (Vibrio succinogenes), this protein is Chromosomal replication initiator protein DnaA.